A 359-amino-acid polypeptide reads, in one-letter code: RNA-binding protein 4B (359 aa).

RRM domains lie at 2–72 and 78–148; these read VKLF…ASKN and TKLH…LSTS. The CCHC-type zinc finger occupies 160–177; sequence SGCYRCGKEGHWSKECPV. An interaction with TNPO3 region spans residues 196 to 359; sequence AVRPPYTMGY…YVDRARYSAF (164 aa).

Interacts with TNPO3, which may mediate nuclear import of the protein.

It is found in the nucleus. The protein localises to the nucleolus. Its function is as follows. Required for the translational activation of PER1 mRNA in response to circadian clock. Binds directly to the 3'-UTR of the PER1 mRNA. The polypeptide is RNA-binding protein 4B (RBM4B) (Sus scrofa (Pig)).